The following is a 1183-amino-acid chain: DNA-directed RNA polymerase subunit beta (1183 aa).

The span at 1149–1162 (DNEIEMADVDDEDA) shows a compositional bias: acidic residues. The tract at residues 1149–1183 (DNEIEMADVDDEDATERKVDLQQKDVPETQKETTD) is disordered. The segment covering 1163–1183 (TERKVDLQQKDVPETQKETTD) has biased composition (basic and acidic residues).

This sequence belongs to the RNA polymerase beta chain family. The RNAP catalytic core consists of 2 alpha, 1 beta, 1 beta' and 1 omega subunit. When a sigma factor is associated with the core the holoenzyme is formed, which can initiate transcription.

It catalyses the reaction RNA(n) + a ribonucleoside 5'-triphosphate = RNA(n+1) + diphosphate. DNA-dependent RNA polymerase catalyzes the transcription of DNA into RNA using the four ribonucleoside triphosphates as substrates. This chain is DNA-directed RNA polymerase subunit beta, found in Staphylococcus haemolyticus (strain JCSC1435).